The primary structure comprises 439 residues: MKIYRSTLLHTPASPFAVPDALQTFSDGALAVGDTGTIAHLGTFTEVLAEVRAACPDAEVHDLRGGVLLPGFIDTHVHYPQVRVLGGLGMALLEWLDRNTLPEEARLADAAYARTIAGEFLHGLASHGTTTALVFGSHFAGAMDEFFAEAAARGLRVVAGQVVSDRLLRPELHTTPERAYAEGKALIERWHGQGRSLYAVTPRFSLSASEGILDACAALLTEFPDVRFTSHINENNQEIEVVRGLFPGARDYLDTYERAGLVTPRSVFAHNVHPNERELGVLAAQRCSVAHCPCSNSALGSGLFPLRRHLAAGVHVALGTDVGGGTGFSLLKEGLQAYFMQQLLGEEGAALSPAHLLYLATLAGAQALGLDGQVGDFTPGKQFDAVWLRPRAGSTLATVLAHAESEERTLAALFALGTGDDVERVWVGGGVVFAREAEA.

Zn(2+) is bound by residues H76 and H78. Substrate contacts are provided by residues 78 to 81, 203 to 204, 231 to 234, and D321; these read HYPQ, RF, and HINE. Residues H231 and D321 each coordinate Zn(2+).

It belongs to the metallo-dependent hydrolases superfamily. ATZ/TRZ family. Requires Zn(2+) as cofactor.

It catalyses the reaction guanine + H2O + H(+) = xanthine + NH4(+). The protein operates within purine metabolism; guanine degradation; xanthine from guanine: step 1/1. Catalyzes the hydrolytic deamination of guanine, producing xanthine and ammonia. This chain is Probable guanine deaminase (guaD), found in Deinococcus radiodurans (strain ATCC 13939 / DSM 20539 / JCM 16871 / CCUG 27074 / LMG 4051 / NBRC 15346 / NCIMB 9279 / VKM B-1422 / R1).